Here is a 227-residue protein sequence, read N- to C-terminus: DNA repair protein RecO (227 aa).

It belongs to the RecO family.

Involved in DNA repair and RecF pathway recombination. This is DNA repair protein RecO from Pseudomonas putida (strain GB-1).